We begin with the raw amino-acid sequence, 293 residues long: Protease HtpX (293 aa).

A run of 2 helical transmembrane segments spans residues 4–24 (IALFLLTNLAVMVVFGLVLSL) and 34–54 (GLMIMALLFGFGGSFVSLLMS). H139 serves as a coordination point for Zn(2+). The active site involves E140. Position 143 (H143) interacts with Zn(2+). The next 2 helical transmembrane spans lie at 158-178 (VVNTFVIFISRILAQLAAGFM) and 193-213 (LIYFAVATVLELVFGILASII). A Zn(2+)-binding site is contributed by E222.

This sequence belongs to the peptidase M48B family. The cofactor is Zn(2+).

Its subcellular location is the cell inner membrane. The polypeptide is Protease HtpX (Escherichia fergusonii (strain ATCC 35469 / DSM 13698 / CCUG 18766 / IAM 14443 / JCM 21226 / LMG 7866 / NBRC 102419 / NCTC 12128 / CDC 0568-73)).